The primary structure comprises 880 residues: Dynamin-like protein A (880 aa).

Residues 1–124 form a disordered region; sequence MSVFKKKDKS…QVELERKRRD (124 aa). Basic and acidic residues predominate over residues 8-20; it reads DKSDDKKKKHDEE. A compositionally biased stretch (polar residues) spans 22 to 31; it reads PQGTFQPASQ. The segment covering 32-68 has biased composition (low complexity); the sequence is STSNTNLNSLASSVNNGASVGSTNGSTPNNSNGSTPT. Residues 69 to 152 are a coiled coil; it reads YNHNNSAEEL…NEQVEISSLE (84 aa). 2 stretches are compositionally biased toward basic and acidic residues: residues 77-94 and 103-124; these read ELEKQKKEEDEKRKKSEL and KKKEDEEKQRKEQVELERKRRD. The Dynamin-type G domain occupies 191 to 478; it reads AVSHPEIVFV…VWKSYQDTIP (288 aa). The G1 motif stretch occupies residues 201 to 208; it reads GPRSSGKS. 201 to 208 lines the GTP pocket; sequence GPRSSGKS. The interval 227–240 is G2 motif; that stretch reads IVGVGGSNANGCSK. A G3 motif region spans residues 315-318; the sequence is DSPG. GTP is bound by residues 315-319 and 380-383; these read DSPGL and TKFH. Positions 380–383 are G4 motif; that stretch reads TKFH. Residues 413–416 are G5 motif; it reads LPNH. Positions 479-509 form a coiled coil; sequence RILKHLRSKRQTAEATLNELQKQSSSLDSTK. The span at 532–543 shows a compositional bias: polar residues; the sequence is TSEGNPSANGQT. A disordered region spans residues 532-551; sequence TSEGNPSANGQTLDEEKSQQ. Positions 824 to 861 form a coiled coil; it reads SNEQLEQLFEVQATREQLKQEEKKQQQILEKYSQIDEQ.

Belongs to the TRAFAC class dynamin-like GTPase superfamily. Dynamin/Fzo/YdjA family.

It localises to the cytoplasm. The protein resides in the cleavage furrow. The enzyme catalyses GTP + H2O = GDP + phosphate + H(+). Involved in cytokinesis. May hydrolyze GTP. The protein is Dynamin-like protein A (dlpA) of Dictyostelium discoideum (Social amoeba).